Here is a 297-residue protein sequence, read N- to C-terminus: N-acetylmuramoyl-L-alanine amidase XlyA (297 aa).

Residues 1-44 (MVNIIQDFIPVGANNRPGYAMTPLYITVHNTANTAVGADAAAHA) form the signal peptide. Residues 45–140 (RYLKNPDTTT…KYWSGKECPR (96 aa)) form the N-acetylmuramoyl-L-alanine amidase domain. A LysM domain is found at 159–203 (QTYVVKQGDTLTSIARAFGVTVAQLQEWNNIEDPNLIRVGQVLIV).

This sequence belongs to the N-acetylmuramoyl-L-alanine amidase 2 family.

It localises to the secreted. The catalysed reaction is Hydrolyzes the link between N-acetylmuramoyl residues and L-amino acid residues in certain cell-wall glycopeptides.. Functionally, autolysins are involved in some important biological processes such as cell separation, cell-wall turnover, competence for genetic transformation, formation of the flagella and sporulation. The chain is N-acetylmuramoyl-L-alanine amidase XlyA (xlyA) from Bacillus subtilis (strain 168).